A 556-amino-acid chain; its full sequence is MSKPETTAAPNFLRQIVQADLDAGKHAKIVTRFPPEPNGYLHIGHAKSICLNFGLAQEFAGDCHLRFDDTNPAKEDQEYIDAIEADIKWLGFQWSGEVCYASNYFDQLHAWAIELIKAGKAFVCDLGPEEMREYRGTLTEPGRNSPYRDRSVEENLDLFARMKAGEFPDGARSLRAKIDMGSPNMNLRDPILYRIRHAHHHQTGDKWCIYPSYDFTHGQSDAIEGITHSICTLEFEDHRPLYEWFLANLPVPAQPRQYEFSRLNLNYTVTSKRKLKQLVDEGHVSGWDDPRMSTLSGYRRRGYTPESIRNFCEMIGVNRASGVVDIGMLEFSIRDHLDATAPRAMCVLKPLKVVITNYPEGQVENLELPRHPKEDMGVRVLPFGRELFIDAGDFEEVPPAGYKRLIPGGEVRLRGSYVIRADEAIKDADGNIVELRCSYDPDTLGKNPEGRKVKGVIHWVPAEGSVECEVRLYDRLFRSANPEKAEEGGSFLDNINADSLQVLTGCRAEPSLGQANPEDRFQFEREGYFVADLKDSRPGKPVFNRTVTLRDSWGQG.

The 'HIGH' region signature appears at 35–45 (PEPNGYLHIGH). Residues 36–38 (EPN) and 42–48 (HIGHAKS) each bind ATP. 2 residues coordinate L-glutamine: Asp-68 and Tyr-213. ATP contacts are provided by residues Thr-232 and 262–263 (RL). The short motif at 269-273 (VTSKR) is the 'KMSKS' region element.

This sequence belongs to the class-I aminoacyl-tRNA synthetase family. As to quaternary structure, monomer.

It localises to the cytoplasm. The catalysed reaction is tRNA(Gln) + L-glutamine + ATP = L-glutaminyl-tRNA(Gln) + AMP + diphosphate. This Pseudomonas aeruginosa (strain LESB58) protein is Glutamine--tRNA ligase.